The following is a 202-amino-acid chain: IMP cyclohydrolase (202 aa).

The segment at 29–52 (VQRDGTVTVEPTPDAPETDNPYIS) is disordered.

Belongs to the archaeal IMP cyclohydrolase family.

It carries out the reaction IMP + H2O = 5-formamido-1-(5-phospho-D-ribosyl)imidazole-4-carboxamide. It functions in the pathway purine metabolism; IMP biosynthesis via de novo pathway; IMP from 5-formamido-1-(5-phospho-D-ribosyl)imidazole-4-carboxamide: step 1/1. In terms of biological role, catalyzes the cyclization of 5-formylamidoimidazole-4-carboxamide ribonucleotide to IMP. The chain is IMP cyclohydrolase from Haloarcula marismortui (strain ATCC 43049 / DSM 3752 / JCM 8966 / VKM B-1809) (Halobacterium marismortui).